A 357-amino-acid chain; its full sequence is Maleylacetate reductase 1 (357 aa).

Belongs to the iron-containing alcohol dehydrogenase family.

It catalyses the reaction 3-oxoadipate + NAD(+) = maleylacetate + NADH + H(+). The enzyme catalyses 3-oxoadipate + NADP(+) = maleylacetate + NADPH + H(+). It participates in aromatic compound metabolism; 3-chlorocatechol degradation. Functionally, plays a major role in the degradation of chloroaromatic compounds by channeling maleylacetate and some of its substituted derivatives into the 3-oxoadipate pathway. This enzyme converts maleylacetate and 2-chloromaleylacetate with similar efficiencies. This is Maleylacetate reductase 1 (macA) from Rhodococcus opacus (Nocardia opaca).